A 593-amino-acid chain; its full sequence is Pentatricopeptide repeat-containing protein At5g24830 (593 aa).

PPR repeat units lie at residues 120–154 (CLSIHSSIMRDLCLQGKLDAALWLRKKMIYSGVIP), 155–189 (GLITHNHLLNGLCKAGYIEKADGLVREMREMGPSP), 190–224 (NCVSYNTLIKGLCSVNNVDKALYLFNTMNKYGIRP), 225–256 (NRVTCNIIVHALCQKGVIGNNNKKLLEEILDS), 264–298 (DIVICTILMDSCFKNGNVVQALEVWKEMSQKNVPA), 299–333 (DSVVYNVIIRGLCSSGNMVAAYGFMCDMVKRGVNP), 334–368 (DVFTYNTLISALCKEGKFDEACDLHGTMQNGGVAP), 369–403 (DQISYKVIIQGLCIHGDVNRANEFLLSMLKSSLLP), 404–438 (EVLLWNVVIDGYGRYGDTSSALSVLNLMLSYGVKP), 439–473 (NVYTNNALIHGYVKGGRLIDAWWVKNEMRSTKIHP), 474–508 (DTTTYNLLLGAACTLGHLRLAFQLYDEMLRRGCQP), and 509–543 (DIITYTELVRGLCWKGRLKKAESLLSRIQATGITI).

The protein belongs to the PPR family. P subfamily.

This is Pentatricopeptide repeat-containing protein At5g24830 from Arabidopsis thaliana (Mouse-ear cress).